The primary structure comprises 224 residues: Flagellar L-ring protein (224 aa).

The first 15 residues, 1 to 15, serve as a signal peptide directing secretion; the sequence is MARYLLLASTLLLAA. A lipid anchor (N-palmitoyl cysteine) is attached at C16. The S-diacylglycerol cysteine moiety is linked to residue C16.

This sequence belongs to the FlgH family. As to quaternary structure, the basal body constitutes a major portion of the flagellar organelle and consists of four rings (L,P,S, and M) mounted on a central rod.

The protein resides in the cell outer membrane. It localises to the bacterial flagellum basal body. Functionally, assembles around the rod to form the L-ring and probably protects the motor/basal body from shearing forces during rotation. The polypeptide is Flagellar L-ring protein (Shewanella sp. (strain ANA-3)).